The sequence spans 333 residues: Anthranilate phosphoribosyltransferase (333 aa).

5-phospho-alpha-D-ribose 1-diphosphate contacts are provided by residues G80, G83 to D84, S88, N90 to T93, K108 to S116, and S120. G80 lines the anthranilate pocket. S92 contacts Mg(2+). N111 lines the anthranilate pocket. Anthranilate is bound at residue R166. The Mg(2+) site is built by D224 and E225.

Belongs to the anthranilate phosphoribosyltransferase family. In terms of assembly, homodimer. The cofactor is Mg(2+).

The enzyme catalyses N-(5-phospho-beta-D-ribosyl)anthranilate + diphosphate = 5-phospho-alpha-D-ribose 1-diphosphate + anthranilate. Its pathway is amino-acid biosynthesis; L-tryptophan biosynthesis; L-tryptophan from chorismate: step 2/5. Its function is as follows. Catalyzes the transfer of the phosphoribosyl group of 5-phosphorylribose-1-pyrophosphate (PRPP) to anthranilate to yield N-(5'-phosphoribosyl)-anthranilate (PRA). This Yersinia pseudotuberculosis serotype O:1b (strain IP 31758) protein is Anthranilate phosphoribosyltransferase.